Consider the following 568-residue polypeptide: 2-succinyl-5-enolpyruvyl-6-hydroxy-3-cyclohexene-1-carboxylate synthase (568 aa).

Belongs to the TPP enzyme family. MenD subfamily. Homodimer. The cofactor is Mg(2+). It depends on Mn(2+) as a cofactor. Thiamine diphosphate is required as a cofactor.

It carries out the reaction isochorismate + 2-oxoglutarate + H(+) = 5-enolpyruvoyl-6-hydroxy-2-succinyl-cyclohex-3-ene-1-carboxylate + CO2. It functions in the pathway quinol/quinone metabolism; 1,4-dihydroxy-2-naphthoate biosynthesis; 1,4-dihydroxy-2-naphthoate from chorismate: step 2/7. The protein operates within quinol/quinone metabolism; menaquinone biosynthesis. In terms of biological role, catalyzes the thiamine diphosphate-dependent decarboxylation of 2-oxoglutarate and the subsequent addition of the resulting succinic semialdehyde-thiamine pyrophosphate anion to isochorismate to yield 2-succinyl-5-enolpyruvyl-6-hydroxy-3-cyclohexene-1-carboxylate (SEPHCHC). The protein is 2-succinyl-5-enolpyruvyl-6-hydroxy-3-cyclohexene-1-carboxylate synthase of Histophilus somni (strain 2336) (Haemophilus somnus).